A 201-amino-acid chain; its full sequence is Proteasome subunit beta 1 (201 aa).

Positions 1–10 are cleaved as a propeptide — removed in mature form; by autocatalysis; the sequence is MNGSPSAMKG. Thr-11 serves as the catalytic Nucleophile.

It belongs to the peptidase T1B family. In terms of assembly, the 20S proteasome core is composed of 14 alpha and 14 beta subunits that assemble into four stacked heptameric rings, resulting in a barrel-shaped structure. The two inner rings, each composed of seven catalytic beta subunits, are sandwiched by two outer rings, each composed of seven alpha subunits. The catalytic chamber with the active sites is on the inside of the barrel. Has a gated structure, the ends of the cylinder being occluded by the N-termini of the alpha-subunits. Is capped at one or both ends by the proteasome regulatory ATPase, PAN.

The protein resides in the cytoplasm. It catalyses the reaction Cleavage of peptide bonds with very broad specificity.. Its activity is regulated as follows. The formation of the proteasomal ATPase PAN-20S proteasome complex, via the docking of the C-termini of PAN into the intersubunit pockets in the alpha-rings, triggers opening of the gate for substrate entry. Interconversion between the open-gate and close-gate conformations leads to a dynamic regulation of the 20S proteasome proteolysis activity. In terms of biological role, component of the proteasome core, a large protease complex with broad specificity involved in protein degradation. The protein is Proteasome subunit beta 1 of Thermococcus gammatolerans (strain DSM 15229 / JCM 11827 / EJ3).